Consider the following 94-residue polypeptide: Protein S100-A1 (94 aa).

2 EF-hand domains span residues 13–48 (INVFHAHSGKEGDKYKLSKKELKELLQTELSGFLDA) and 50–85 (KDVDAVDKVMKELDENGDGEVDFQEYVVLVAALTVA). Residues Lys-28, Glu-33, Asp-63, Asn-65, Asp-67, Glu-69, and Glu-74 each coordinate Ca(2+). Cys-86 is modified (S-nitrosocysteine).

Belongs to the S-100 family. Dimer of either two alpha chains, or two beta chains, or one alpha and one beta chain. Also forms heterodimers with S100P. Interacts with AGER. Interacts with CAPZA1. Interacts with FKBP4. Interacts with RYR1 and RYR2. Interacts with CACYBP in a calcium-dependent manner. Interacts with PPP5C (via TPR repeats); the interaction is calcium-dependent and modulates PPP5C activity. Interacts with ATP2A2 and PLN in a Ca(2+)-dependent manner. Interacts with mitochondrial F1-ATPase subunits ATP5F1A and ATP5F1B; these interactions increase F1-ATPase activity. In terms of processing, glutathionylated; glutathionylation increases affinity to calcium about 10-fold. Highly prevalent in heart. Also found in lesser quantities in skeletal muscle and brain.

Its subcellular location is the cytoplasm. It is found in the sarcoplasmic reticulum. The protein resides in the mitochondrion. Small calcium binding protein that plays important roles in several biological processes such as Ca(2+) homeostasis, chondrocyte biology and cardiomyocyte regulation. In response to an increase in intracellular Ca(2+) levels, binds calcium which triggers conformational changes. These changes allow interactions with specific target proteins and modulate their activity. Regulates a network in cardiomyocytes controlling sarcoplasmic reticulum Ca(2+) cycling and mitochondrial function through interaction with the ryanodine receptors RYR1 and RYR2, sarcoplasmic reticulum Ca(2+)-ATPase/ATP2A2 and mitochondrial F1-ATPase. Facilitates diastolic Ca(2+) dissociation and myofilament mechanics in order to improve relaxation during diastole. The sequence is that of Protein S100-A1 (S100A1) from Homo sapiens (Human).